The primary structure comprises 170 residues: Translationally-controlled tumor protein homolog (170 aa).

In terms of domain architecture, TCTP spans 1–170 (MLIYSDIITG…WKHGLKETKV (170 aa)).

This sequence belongs to the TCTP family.

Its subcellular location is the cytoplasm. It localises to the cytoskeleton. Involved in protein synthesis. Involved in microtubule stabilization. This chain is Translationally-controlled tumor protein homolog, found in Neurospora crassa (strain ATCC 24698 / 74-OR23-1A / CBS 708.71 / DSM 1257 / FGSC 987).